Here is a 296-residue protein sequence, read N- to C-terminus: MNLVSEKEFLDLPLVSVAEIVRCRGPKVSVFPFDGTRRWFHLECNPQYDDYQQAALRQSIRILKMLFEHGIETVISPIFSDDLLDRGDRYIVQALEGMALLANDEEILSFYKEHEVHVLFYGDYKKRLPSTAQGAAVVKSFDDLTISTSSNTEHRLCFGVFGNDAAESVAQFSISWNETHGKPPTRREIIEGYYGEYVDKADMFIGFGRFSTFDFPLLSSGKTSLYFTVAPSYYMTETTLRRILYDHIYLRHFRPKPDYSAMSADQLNVLRNRYRAQPDRVFGVGCVHDGIWFAEG.

The protein belongs to the diterpene synthase family. In terms of assembly, homodimer. Mg(2+) serves as cofactor.

It catalyses the reaction tuberculosinyl diphosphate + adenosine + H(+) = 1-tuberculosinyladenosine + diphosphate. The catalysed reaction is tuberculosinyl diphosphate + H2O = tuberculosinol + diphosphate. It carries out the reaction tuberculosinyl diphosphate + H2O = (13R)-edaxadiene + diphosphate. The enzyme catalyses tuberculosinyl diphosphate + H2O = (13S)-edaxadiene + diphosphate. Tuberculosinyl transferase that catalyzes the condensation of adenosine and tuberculosinyl diphosphate (TbPP) to generate 1-tuberculosinyladenosine (1-TbAd), which acts as an antiacid that directly protects M.tuberculosis from acid pH and physically remodels M.tuberculosis phagolysosomes. In addition, acts as a phosphatase that catalyzes the diphosphate-removal from TbPP to produce both tuberculosinol (TOH) and isotuberculosinol (iso-TOH). The polypeptide is Tuberculosinyl adenosine transferase (Mycobacterium tuberculosis (strain CDC 1551 / Oshkosh)).